Reading from the N-terminus, the 359-residue chain is Malonyl-CoA reductase (359 aa).

16 to 19 (TGLV) is a binding site for NADP(+). The active-site Acyl-thioester intermediate is the Cys153. 183–184 (SG) is a binding site for NADP(+). Catalysis depends on His248, which acts as the Proton acceptor. 335–336 (NT) contacts NADP(+).

The protein belongs to the aspartate-semialdehyde dehydrogenase family. Homodimer and possibly a tetramer. The cofactor is Mg(2+). It depends on Mn(2+) as a cofactor.

The catalysed reaction is 3-oxopropanoate + NADP(+) + CoA = malonyl-CoA + NADPH + H(+). With respect to regulation, activated by dithioerythritol (5 mM) and inhibited by the thiol-blocking agent iodoacetamide (0.1 mM). Catalyzes the reduction of malonyl-CoA to malonate semialdehyde, a key step in the 3-hydroxypropanoate and the 3-hydroxypropanoate/4-hydroxybutyrate cycles. Can also use succinyl-CoA and succinate semialdehyde as substrates but at a lower rate than malonyl-CoA. This is Malonyl-CoA reductase (mcr) from Sulfurisphaera tokodaii (strain DSM 16993 / JCM 10545 / NBRC 100140 / 7) (Sulfolobus tokodaii).